Consider the following 321-residue polypeptide: MSMKGISSAESDKLSRRISLTHKRNSEELDVFEAAVYFGYNEASSGDHGHTQKYGYNAAREENPRRWGILGGGRRISLDLPIRCSEQVYHLQQDHHEKHEVTTIKERLGNVRHKQPSSPGGKIASFLNSLFHQAGSKKNKSKSKSKTKPTDPEVEEEIPGGGWMRRRRRSSISHFFSSSRSTSTTTTTTASSSSKSLISSSSSGFRTPPPYLNTPTKNYKQFLNYTSATKQVGEEETKTNKEYSWLDEKLKVMESLSENQRIWSDDEDIDDDRRIKREGEDDGMESDSSSDLFELQNYELSRGGLPVYETTNVANINKTHI.

Residues 134–217 (AGSKKNKSKS…PPPYLNTPTK (84 aa)) form a disordered region. Residues 135 to 147 (GSKKNKSKSKSKT) are compositionally biased toward basic residues. Low complexity predominate over residues 172–206 (ISHFFSSSRSTSTTTTTTASSSSKSLISSSSSGFR).

This sequence belongs to the BIG GRAIN 1 (BG1) plant protein family.

The protein localises to the cell membrane. Its function is as follows. Involved in auxin transport. Regulator of the auxin signaling pathway. The protein is Protein BIG GRAIN 1-like E of Arabidopsis thaliana (Mouse-ear cress).